Consider the following 478-residue polypeptide: Probable cytosolic Fe-S cluster assembly factor CPIJ010948 (478 aa).

Positions 23, 69, 72, 75, 189, 245, 396, and 400 each coordinate [4Fe-4S] cluster.

It belongs to the NARF family.

Its function is as follows. Component of the cytosolic iron-sulfur (Fe/S) protein assembly machinery. Required for maturation of extramitochondrial Fe/S proteins. The polypeptide is Probable cytosolic Fe-S cluster assembly factor CPIJ010948 (Culex quinquefasciatus (Southern house mosquito)).